The primary structure comprises 246 residues: ATP synthase subunit b 1 (246 aa).

The chain crosses the membrane as a helical span at residues 5-27 (WFTFTAQVINFLVLVGLLRYFLY).

This sequence belongs to the ATPase B chain family. As to quaternary structure, F-type ATPases have 2 components, F(1) - the catalytic core - and F(0) - the membrane proton channel. F(1) has five subunits: alpha(3), beta(3), gamma(1), delta(1), epsilon(1). F(0) has three main subunits: a(1), b(2) and c(10-14). The alpha and beta chains form an alternating ring which encloses part of the gamma chain. F(1) is attached to F(0) by a central stalk formed by the gamma and epsilon chains, while a peripheral stalk is formed by the delta and b chains.

The protein resides in the cell inner membrane. Functionally, f(1)F(0) ATP synthase produces ATP from ADP in the presence of a proton or sodium gradient. F-type ATPases consist of two structural domains, F(1) containing the extramembraneous catalytic core and F(0) containing the membrane proton channel, linked together by a central stalk and a peripheral stalk. During catalysis, ATP synthesis in the catalytic domain of F(1) is coupled via a rotary mechanism of the central stalk subunits to proton translocation. Component of the F(0) channel, it forms part of the peripheral stalk, linking F(1) to F(0). The chain is ATP synthase subunit b 1 from Rhodopirellula baltica (strain DSM 10527 / NCIMB 13988 / SH1).